We begin with the raw amino-acid sequence, 264 residues long: Thymidylate synthase (264 aa).

R21 lines the dUMP pocket. A (6R)-5,10-methylene-5,6,7,8-tetrahydrofolate-binding site is contributed by H51. Position 126–127 (126–127 (RR)) interacts with dUMP. C146 serves as the catalytic Nucleophile. Residues 166–169 (RSCD), N177, and 207–209 (HLY) contribute to the dUMP site. (6R)-5,10-methylene-5,6,7,8-tetrahydrofolate is bound at residue D169. S263 provides a ligand contact to (6R)-5,10-methylene-5,6,7,8-tetrahydrofolate.

Belongs to the thymidylate synthase family. Bacterial-type ThyA subfamily. In terms of assembly, homodimer.

The protein localises to the cytoplasm. The enzyme catalyses dUMP + (6R)-5,10-methylene-5,6,7,8-tetrahydrofolate = 7,8-dihydrofolate + dTMP. The protein operates within pyrimidine metabolism; dTTP biosynthesis. In terms of biological role, catalyzes the reductive methylation of 2'-deoxyuridine-5'-monophosphate (dUMP) to 2'-deoxythymidine-5'-monophosphate (dTMP) while utilizing 5,10-methylenetetrahydrofolate (mTHF) as the methyl donor and reductant in the reaction, yielding dihydrofolate (DHF) as a by-product. This enzymatic reaction provides an intracellular de novo source of dTMP, an essential precursor for DNA biosynthesis. This chain is Thymidylate synthase, found in Buchnera aphidicola subsp. Acyrthosiphon pisum (strain Tuc7).